The chain runs to 237 residues: tRNA (guanine-N(1)-)-methyltransferase (237 aa).

S-adenosyl-L-methionine is bound by residues glycine 112 and 132-137 (IGDFVL).

This sequence belongs to the RNA methyltransferase TrmD family. In terms of assembly, homodimer.

It localises to the cytoplasm. The catalysed reaction is guanosine(37) in tRNA + S-adenosyl-L-methionine = N(1)-methylguanosine(37) in tRNA + S-adenosyl-L-homocysteine + H(+). Functionally, specifically methylates guanosine-37 in various tRNAs. This chain is tRNA (guanine-N(1)-)-methyltransferase, found in Thermosynechococcus vestitus (strain NIES-2133 / IAM M-273 / BP-1).